The primary structure comprises 651 residues: ATP-binding cassette sub-family G member 5 (651 aa).

The disordered stretch occupies residues 1–32; the sequence is MGDLSSLTPGGSMGLQVNRGSQSSLEGAPATA. Residues 1 to 383 lie on the Cytoplasmic side of the membrane; the sequence is MGDLSSLTPG…RVTRNLVRNK (383 aa). The 242-residue stretch at 52-293 folds into the ABC transporter domain; it reads RPWWDITSCR…FNDCGYPCPE (242 aa). 86–93 contributes to the ATP binding site; sequence GSSGSGKT. Residues 384–404 form a helical membrane-spanning segment; that stretch reads LAVITRLLQNLIMGLFLLFFV. In terms of domain architecture, ABC transmembrane type-2 spans 388-645; that stretch reads TRLLQNLIMG…ILGIVVFKIR (258 aa). At 405–421 the chain is on the extracellular side; that stretch reads LRVRSNVLKGAIQDRVG. The chain crosses the membrane as a helical span at residues 422 to 442; that stretch reads LLYQFVGATPYTGMLNAVNLF. Over 443 to 467 the chain is Cytoplasmic; sequence PVLRAVSDQESQDGLYQKWQMMLAY. The helical transmembrane segment at 468–489 threads the bilayer; the sequence is ALHVLPFSVVATMIFSSVCYWT. Topologically, residues 490–500 are extracellular; the sequence is LGLHPEVARFG. A helical membrane pass occupies residues 501–521; sequence YFSAALLAPHLIGEFLTLVLL. The Cytoplasmic segment spans residues 522-528; it reads GIVQNPN. The chain crosses the membrane as a helical span at residues 529–549; that stretch reads IVNSVVALLSIAGVLVGSGFL. Topologically, residues 550–623 are extracellular; that stretch reads RNIQEMPIPF…PGATSRFTMN (74 aa). Asn-584 and Asn-591 each carry an N-linked (GlcNAc...) asparagine glycan. The helical transmembrane segment at 624–644 threads the bilayer; it reads FLILYSFIPALVILGIVVFKI. At 645 to 651 the chain is on the cytoplasmic side; sequence RDHLISR.

This sequence belongs to the ABC transporter superfamily. ABCG family. Eye pigment precursor importer (TC 3.A.1.204) subfamily. In terms of assembly, heterodimer with ABCG8. It depends on Mg(2+) as a cofactor. In terms of processing, N-glycosylated. In terms of tissue distribution, strongly expressed in the liver, lower levels in the small intestine and colon.

It localises to the cell membrane. It is found in the apical cell membrane. The catalysed reaction is cholesterol(in) + ATP + H2O = cholesterol(out) + ADP + phosphate + H(+). It carries out the reaction sitosterol(in) + ATP + H2O = sitosterol(out) + ADP + phosphate + H(+). Its activity is regulated as follows. The ATPase activity of the heterodimer is stimulated by cholate. Taurocholate, glycocholate, taurochenodeoxycholate, glycochenodeoxycholate and taurodeoxycholate also stimulate ATPase activity, but to a lower degree. Glycodeoxycholate has no significant effect on ATPase activity. ATPase activity is inhibited by vanadate and by berillium fluoride. Its function is as follows. ABCG5 and ABCG8 form an obligate heterodimer that mediates Mg(2+)- and ATP-dependent sterol transport across the cell membrane. Plays an essential role in the selective transport of dietary plant sterols and cholesterol in and out of the enterocytes and in the selective sterol excretion by the liver into bile. Required for normal sterol homeostasis. The heterodimer with ABCG8 has ATPase activity. This chain is ATP-binding cassette sub-family G member 5, found in Homo sapiens (Human).